Here is a 243-residue protein sequence, read N- to C-terminus: Transcription factor TFIIS homolog (243 aa).

One can recognise a TFIIS central domain in the interval 77–201 (MRDIIQMMFF…SQQKVAEKTS (125 aa)). The TFIIS-type zinc-finger motif lies at 202–242 (QLYKCPNCKQRMCTYREVQTRALDEPSTIYCTCKKCGHEFI). Zn(2+) contacts are provided by C206, C209, C234, and C237.

The protein belongs to the TFS-II family.

Putative initiation factor. Necessary for efficient transcription elongation past template-encoded arresting sites. This chain is Transcription factor TFIIS homolog, found in African swine fever virus (isolate Pig/Kenya/KEN-50/1950) (ASFV).